Here is a 227-residue protein sequence, read N- to C-terminus: uncharacterized protein (227 aa).

It to ORF5 in pFZ1.

This is an uncharacterized protein from Methanothermobacter thermautotrophicus (Methanobacterium thermoformicicum).